The chain runs to 205 residues: MARSGRYKVPFRRRREGLTNYRKRRKLVISKKPRLVVRKTNKHIIAQIVVAKPIGDETVAGADTRILTKFGWRGDENNTSAAYLLGLVVGYKARMRGVEEAILDIGLHRPTPGARVFAVLKGALDAGLKIPHGEEVLPSDERIRGEHIAEYAAKLKEENPDAYKARFSRYLQRGLEPERLPDHFEEVRKAIQQHYENKLAKIVAK.

It belongs to the universal ribosomal protein uL18 family. In terms of assembly, part of the 50S ribosomal subunit. Contacts the 5S and 23S rRNAs.

This is one of the proteins that bind and probably mediate the attachment of the 5S RNA into the large ribosomal subunit, where it forms part of the central protuberance. This is Large ribosomal subunit protein uL18 from Pyrobaculum arsenaticum (strain DSM 13514 / JCM 11321 / PZ6).